Reading from the N-terminus, the 180-residue chain is Zinc finger protein 740 (180 aa).

Polar residues predominate over residues M1–A11. The disordered stretch occupies residues M1 to S62. K9 participates in a covalent cross-link: Glycyl lysine isopeptide (Lys-Gly) (interchain with G-Cter in SUMO2). Position 19 is a phosphoserine (S19). Residues C31 to D56 show a composition bias toward basic and acidic residues. C2H2-type zinc fingers lie at residues F88–H110 and F116–H138. Residues Y144–C166 form a C2H2-type 3; atypical zinc finger.

The protein belongs to the krueppel C2H2-type zinc-finger protein family.

The protein localises to the nucleus. In terms of biological role, may be involved in transcriptional regulation. This is Zinc finger protein 740 (Znf740) from Mus musculus (Mouse).